We begin with the raw amino-acid sequence, 89 residues long: MVISDLEKYYGKPYNNAYYEISNILQEFGFFRTQGSVYLNNNSDMANLMEAIQTLSEVEWFANSVRDIRGFRVEDWSNFTKLVKRKATN.

The protein belongs to the VapD ribonuclease family. Homodimer.

Its function is as follows. Cleaves ssRNA, mostly between U:A. The chain is Endoribonuclease VapD 1 from Riemerella anatipestifer (Moraxella anatipestifer).